Reading from the N-terminus, the 161-residue chain is ATP synthase subunit b (161 aa).

A helical membrane pass occupies residues 1–21 (MYLNATILGQVIAFILFVWFC).

It belongs to the ATPase B chain family. In terms of assembly, F-type ATPases have 2 components, F(1) - the catalytic core - and F(0) - the membrane proton channel. F(1) has five subunits: alpha(3), beta(3), gamma(1), delta(1), epsilon(1). F(0) has three main subunits: a(1), b(2) and c(10-14). The alpha and beta chains form an alternating ring which encloses part of the gamma chain. F(1) is attached to F(0) by a central stalk formed by the gamma and epsilon chains, while a peripheral stalk is formed by the delta and b chains.

The protein localises to the cell inner membrane. F(1)F(0) ATP synthase produces ATP from ADP in the presence of a proton or sodium gradient. F-type ATPases consist of two structural domains, F(1) containing the extramembraneous catalytic core and F(0) containing the membrane proton channel, linked together by a central stalk and a peripheral stalk. During catalysis, ATP synthesis in the catalytic domain of F(1) is coupled via a rotary mechanism of the central stalk subunits to proton translocation. Its function is as follows. Component of the F(0) channel, it forms part of the peripheral stalk, linking F(1) to F(0). The protein is ATP synthase subunit b of Blochmanniella floridana.